The primary structure comprises 161 residues: MLTLPPENRWLFREPFGTVFSDFSMVLPYIEGKIFCTVGDVVTHNALSAGLIPSIGVIDGFTKRSPYLKMPEIQGHILHVTNPAGTITDELIAALRLAMDEIPCVVMVNGEEDLAVLPLTEILPDGAVILYGQPEEGLVICEVNKQLRANAKKLLTYFVSL.

GTP contacts are provided by Asp40, Val41, Val42, Asp59, Glu112, and Glu135.

The protein belongs to the GTP-dependent DPCK family.

The catalysed reaction is 3'-dephospho-CoA + GTP = GDP + CoA + H(+). Its pathway is cofactor biosynthesis; coenzyme A biosynthesis. Catalyzes the GTP-dependent phosphorylation of the 3'-hydroxyl group of dephosphocoenzyme A to form coenzyme A (CoA). This chain is GTP-dependent dephospho-CoA kinase, found in Methanocorpusculum labreanum (strain ATCC 43576 / DSM 4855 / Z).